The following is a 1225-amino-acid chain: Cohesin subunit SA-3 (1225 aa).

Residues 1–97 form a disordered region; sequence MSSPLQRAVG…HSRKQSEPPA (97 aa). The segment covering 15 to 26 has biased composition (low complexity); it reads ALSASSSSSASL. Residues 45–54 are compositionally biased toward acidic residues; it reads LADEDTDFED. Composition is skewed to basic residues over residues 59 to 69 and 76 to 90; these read NVKKRAAKRPP and KHPK…RHSR. The region spanning 309 to 394 is the SCD domain; sequence FVHRYRDVLP…SRFKDRMVSM (86 aa). Disordered regions lie at residues 546-567, 1063-1113, and 1177-1225; these read SEGH…KERK, AETS…STAV, and EEDE…IEDF. A compositionally biased stretch (basic and acidic residues) spans 1078–1089; it reads VEGPAKPNREDV. Low complexity predominate over residues 1090-1099; that stretch reads SSSQEESLQL. The span at 1177 to 1191 shows a compositional bias: acidic residues; it reads EEDEEEELEIQDESN. A compositionally biased stretch (polar residues) spans 1198–1209; sequence DMQASSYSSTSE. Phosphoserine is present on Ser-1203. Residues 1216-1225 are compositionally biased toward acidic residues; it reads DSTELDIEDF.

This sequence belongs to the SCC3 family. Component of the meiosis-specific cohesin complex, which also contains the SMC1 (SMC1A or SMC1B) and SMC3 heterodimer. Such complex likely contains RAD21, or the meiosis-specific related protein REC8. Interacts with CCDC79/TERB1; recruiting cohesin to telomeres to develop structural rigidity. In terms of processing, phosphorylated. In terms of tissue distribution, testis specific.

The protein localises to the nucleus. Its subcellular location is the chromosome. The protein resides in the centromere. Its function is as follows. Meiosis specific component of cohesin complex. The cohesin complex is required for the cohesion of sister chromatids after DNA replication. The cohesin complex apparently forms a large proteinaceous ring within which sister chromatids can be trapped. At anaphase, the complex is cleaved and dissociates from chromatin, allowing sister chromatids to segregate. The meiosis-specific cohesin complex probably replaces mitosis specific cohesin complex when it dissociates from chromatin during prophase I. This chain is Cohesin subunit SA-3 (STAG3), found in Homo sapiens (Human).